Here is a 383-residue protein sequence, read N- to C-terminus: Serpin B5 (383 aa).

Asparagine 106, asparagine 133, asparagine 176, and asparagine 361 each carry an N-linked (GlcNAc...) asparagine glycan.

The protein belongs to the serpin family. Ov-serpin subfamily.

Its subcellular location is the secreted. It is found in the extracellular space. In terms of biological role, may not exhibit serine protease inhibitory activity. In Xenopus laevis (African clawed frog), this protein is Serpin B5 (serpinb5).